The primary structure comprises 656 residues: Putative L-type lectin-domain containing receptor kinase V.2 (656 aa).

The N-terminal stretch at 1–23 (MSLLLKMLLFSLFFFYMASISQC) is a signal peptide. Residues 24–276 (SDPTGGQFSF…EDQERSLSSK (253 aa)) lie on the Extracellular side of the membrane. Positions 29 to 248 (GQFSFNGYLY…SHYILGWSFN (220 aa)) are legume-lectin like. Asn78, Asn124, Asn159, Asn190, and Asn257 each carry an N-linked (GlcNAc...) asparagine glycan. A helical membrane pass occupies residues 277–297 (ILAISLSISGVTLVIVLILGV). The Cytoplasmic portion of the chain corresponds to 298–656 (MLFLKRKKFL…MTESFLSSGR (359 aa)). Positions 334–615 (FKNSEVLGKG…GVATLPHNLL (282 aa)) constitute a Protein kinase domain. ATP is bound by residues 340–348 (LGKGGFGKV) and Lys363. The Proton acceptor role is filled by Asp459.

It in the C-terminal section; belongs to the protein kinase superfamily. Ser/Thr protein kinase family. In the N-terminal section; belongs to the leguminous lectin family.

The protein localises to the cell membrane. The catalysed reaction is L-seryl-[protein] + ATP = O-phospho-L-seryl-[protein] + ADP + H(+). It carries out the reaction L-threonyl-[protein] + ATP = O-phospho-L-threonyl-[protein] + ADP + H(+). The polypeptide is Putative L-type lectin-domain containing receptor kinase V.2 (LECRK52) (Arabidopsis thaliana (Mouse-ear cress)).